Here is a 326-residue protein sequence, read N- to C-terminus: uncharacterized protein (326 aa).

Catalysis depends on tyrosine 53, which acts as the Proton donor. 215 to 225 contacts NADP(+); sequence SPLAGGLLGGK. The stretch at 242–305 forms a coiled coil; it reads IEKHRLQLEK…AVEISLDKEI (64 aa).

It belongs to the aldo/keto reductase family. Aldo/keto reductase 2 subfamily.

This is an uncharacterized protein from Bacillus subtilis (strain 168).